Consider the following 554-residue polypeptide: CTP synthase (554 aa).

The amidoligase domain stretch occupies residues 1–265 (MTPLIFVTGG…DELVIDQFKL (265 aa)). S13 contacts CTP. Residue S13 coordinates UTP. Residues 14 to 19 (SLGKGI) and D71 each bind ATP. Mg(2+)-binding residues include D71 and E139. CTP is bound by residues 146–148 (DIE), 186–191 (KTKPTQ), and K222. UTP is bound by residues 186–191 (KTKPTQ) and K222. Residues 292–545 (TIAVVGKYVD…VRAAREKKAG (254 aa)) form the Glutamine amidotransferase type-1 domain. G353 contributes to the L-glutamine binding site. C380 acts as the Nucleophile; for glutamine hydrolysis in catalysis. Residues 381-384 (YGMQ), E404, and R471 contribute to the L-glutamine site. Residues H518 and E520 contribute to the active site.

The protein belongs to the CTP synthase family. In terms of assembly, homotetramer.

It catalyses the reaction UTP + L-glutamine + ATP + H2O = CTP + L-glutamate + ADP + phosphate + 2 H(+). The enzyme catalyses L-glutamine + H2O = L-glutamate + NH4(+). The catalysed reaction is UTP + NH4(+) + ATP = CTP + ADP + phosphate + 2 H(+). It functions in the pathway pyrimidine metabolism; CTP biosynthesis via de novo pathway; CTP from UDP: step 2/2. Its activity is regulated as follows. Allosterically activated by GTP, when glutamine is the substrate; GTP has no effect on the reaction when ammonia is the substrate. The allosteric effector GTP functions by stabilizing the protein conformation that binds the tetrahedral intermediate(s) formed during glutamine hydrolysis. Inhibited by the product CTP, via allosteric rather than competitive inhibition. Its function is as follows. Catalyzes the ATP-dependent amination of UTP to CTP with either L-glutamine or ammonia as the source of nitrogen. Regulates intracellular CTP levels through interactions with the four ribonucleotide triphosphates. The chain is CTP synthase from Xanthomonas campestris pv. campestris (strain 8004).